The primary structure comprises 155 residues: Ribosomal RNA large subunit methyltransferase H (155 aa).

S-adenosyl-L-methionine-binding positions include Leu-73, Gly-104, and 123–128 (LSPLTL).

The protein belongs to the RNA methyltransferase RlmH family. Homodimer.

The protein resides in the cytoplasm. The enzyme catalyses pseudouridine(1915) in 23S rRNA + S-adenosyl-L-methionine = N(3)-methylpseudouridine(1915) in 23S rRNA + S-adenosyl-L-homocysteine + H(+). Its function is as follows. Specifically methylates the pseudouridine at position 1915 (m3Psi1915) in 23S rRNA. This Stutzerimonas stutzeri (strain A1501) (Pseudomonas stutzeri) protein is Ribosomal RNA large subunit methyltransferase H.